The following is a 424-amino-acid chain: Glutamate-1-semialdehyde 2,1-aminomutase (424 aa).

Position 266 is an N6-(pyridoxal phosphate)lysine (lysine 266).

Belongs to the class-III pyridoxal-phosphate-dependent aminotransferase family. HemL subfamily. As to quaternary structure, homodimer. Pyridoxal 5'-phosphate serves as cofactor.

The protein localises to the cytoplasm. The enzyme catalyses (S)-4-amino-5-oxopentanoate = 5-aminolevulinate. Its pathway is porphyrin-containing compound metabolism; protoporphyrin-IX biosynthesis; 5-aminolevulinate from L-glutamyl-tRNA(Glu): step 2/2. The polypeptide is Glutamate-1-semialdehyde 2,1-aminomutase (Thermus thermophilus (strain ATCC 27634 / DSM 579 / HB8)).